We begin with the raw amino-acid sequence, 148 residues long: UPF0178 protein BH16190 (148 aa).

It belongs to the UPF0178 family.

This chain is UPF0178 protein BH16190, found in Bartonella henselae (strain ATCC 49882 / DSM 28221 / CCUG 30454 / Houston 1) (Rochalimaea henselae).